The chain runs to 214 residues: Adenylate kinase (214 aa).

10 to 15 (GAGKGT) is a binding site for ATP. The interval 30-59 (STGDMLRAAIKAGTELGKQAKAVIDAGQLV) is NMP. AMP-binding positions include T31, R36, 57 to 59 (QLV), 85 to 88 (GFPR), and Q92. Residues 122 to 159 (GRRAHLPSGRTYHVVYNPPKVEGKDDVTGEDLVIREDD) form an LID region. Residues R123 and 132-133 (TY) each bind ATP. The AMP site is built by R156 and R167. Position 200 (K200) interacts with ATP.

It belongs to the adenylate kinase family. In terms of assembly, monomer.

Its subcellular location is the cytoplasm. The enzyme catalyses AMP + ATP = 2 ADP. It functions in the pathway purine metabolism; AMP biosynthesis via salvage pathway; AMP from ADP: step 1/1. Its function is as follows. Catalyzes the reversible transfer of the terminal phosphate group between ATP and AMP. Plays an important role in cellular energy homeostasis and in adenine nucleotide metabolism. The sequence is that of Adenylate kinase from Vibrio cholerae serotype O1 (strain ATCC 39541 / Classical Ogawa 395 / O395).